The primary structure comprises 360 residues: GTPase Obg (360 aa).

The 156-residue stretch at Met1–Ile156 folds into the Obg domain. Residues Ala157 to Gln360 form the OBG-type G domain. GTP contacts are provided by residues Gly163–Ser170, Phe188–Val192, Asp210–Gly213, Asn279–Asp282, and Ser341–Val343. The Mg(2+) site is built by Ser170 and Thr190.

Belongs to the TRAFAC class OBG-HflX-like GTPase superfamily. OBG GTPase family. Monomer. The cofactor is Mg(2+).

Its subcellular location is the cytoplasm. Functionally, an essential GTPase which binds GTP, GDP and possibly (p)ppGpp with moderate affinity, with high nucleotide exchange rates and a fairly low GTP hydrolysis rate. Plays a role in control of the cell cycle, stress response, ribosome biogenesis and in those bacteria that undergo differentiation, in morphogenesis control. The chain is GTPase Obg from Helicobacter pylori (strain J99 / ATCC 700824) (Campylobacter pylori J99).